The following is a 196-amino-acid chain: Small ribosomal subunit protein uS4C (196 aa).

The S4 RNA-binding domain occupies 87 to 149 (CRLDNVVYRI…HRQNEMFSNN (63 aa)).

It belongs to the universal ribosomal protein uS4 family. In terms of assembly, part of the 30S ribosomal subunit. Contacts protein S5. The interaction surface between S4 and S5 is involved in control of translational fidelity.

One of the primary rRNA binding proteins, it binds directly to 16S rRNA where it nucleates assembly of the body of the 30S subunit. Functionally, with S5 and S12 plays an important role in translational accuracy. This Clostridium acetobutylicum (strain ATCC 824 / DSM 792 / JCM 1419 / IAM 19013 / LMG 5710 / NBRC 13948 / NRRL B-527 / VKM B-1787 / 2291 / W) protein is Small ribosomal subunit protein uS4C (rpsD3).